The chain runs to 348 residues: MTEYKNIIVTGGAGFIGSNFVHYVYNNHPDVHVTVLDKLTYAGNRANLEEILGDRVELVVGDIADSELVDKLAAKADAIVHYAAESHNDNSLKDPSPFIYTNFVGTYILLEAARKYDIRFHHVSTDEVYGDLPLREDLPGHGEGPGEKFTAETKYNPSSPYSSTKAASDLIVKAWVRSFGVKATISNCSNNYGPYQHIEKFIPRQITNILSGIKPKLYGEGKNVRDWIHTNDHSTGVWAILTKGRIGETYLIGADGEKNNKEVLELILEKMSQPKNAYDHVTDRAGHDLRYAIDSTKLREELGWKPQFTNFEEGLEDTIKWYTEHEDWWKAEKEAVEANYAKTQKILN.

Residues 15–16 (FI), 37–40 (DKLT), 62–63 (DI), and 82–86 (YAAES) contribute to the NAD(+) site. Residues Ser86 and Asn88 each coordinate substrate. Position 101 (Thr101) interacts with NAD(+). Thr125 serves as a coordination point for substrate. The active-site Proton donor is Asp126. Catalysis depends on proton acceptor residues Glu127 and Tyr161. 161-165 (YSSTK) is an NAD(+) binding site. Position 190 (Asn190) interacts with substrate. Asn191 lines the NAD(+) pocket. Substrate-binding positions include 200–205 (KFIPRQ), 216–218 (KLY), Arg225, Asn260, and 283–287 (DRAGH).

This sequence belongs to the NAD(P)-dependent epimerase/dehydratase family. dTDP-glucose dehydratase subfamily. As to quaternary structure, homodimer. It depends on NAD(+) as a cofactor.

It carries out the reaction dTDP-alpha-D-glucose = dTDP-4-dehydro-6-deoxy-alpha-D-glucose + H2O. It participates in carbohydrate biosynthesis; dTDP-L-rhamnose biosynthesis. Its function is as follows. Catalyzes the dehydration of dTDP-D-glucose to form dTDP-6-deoxy-D-xylo-4-hexulose via a three-step process involving oxidation, dehydration and reduction. This is dTDP-glucose 4,6-dehydratase (rmlB) from Streptococcus mutans serotype c (strain ATCC 700610 / UA159).